The chain runs to 495 residues: Leucine aminopeptidase 2 (495 aa).

An N-terminal signal peptide occupies residues 1 to 21 (MKSQLLSLAVAVSTISQGVVG). The region spanning 124–218 (PPANKIMAEL…EDGKNLASLV (95 aa)) is the PA domain. Asn-142 and Asn-235 each carry an N-linked (GlcNAc...) asparagine glycan. Zn(2+)-binding residues include His-259 and Asp-271. A glycan (N-linked (GlcNAc...) asparagine) is linked at Asn-272. Glu-303 serves as the catalytic Proton acceptor. Zn(2+)-binding residues include Glu-304 and Asp-332. Asn-352 carries N-linked (GlcNAc...) asparagine glycosylation. Residue His-430 participates in Zn(2+) binding.

It belongs to the peptidase M28 family. M28A subfamily. Monomer. Zn(2+) serves as cofactor.

The protein localises to the secreted. In terms of biological role, extracellular aminopeptidase that releases a wide variety of amino acids from natural peptides and contributes to pathogenicity. This Trichophyton tonsurans (Scalp ringworm fungus) protein is Leucine aminopeptidase 2 (LAP2).